The following is a 302-amino-acid chain: Acetylglutamate kinase (302 aa).

Substrate-binding positions include 68–69 (GG), Arg-90, and Asn-194.

It belongs to the acetylglutamate kinase family. ArgB subfamily.

The protein resides in the cytoplasm. It catalyses the reaction N-acetyl-L-glutamate + ATP = N-acetyl-L-glutamyl 5-phosphate + ADP. It participates in amino-acid biosynthesis; L-arginine biosynthesis; N(2)-acetyl-L-ornithine from L-glutamate: step 2/4. Functionally, catalyzes the ATP-dependent phosphorylation of N-acetyl-L-glutamate. The chain is Acetylglutamate kinase from Acinetobacter baumannii (strain AB307-0294).